We begin with the raw amino-acid sequence, 151 residues long: CD-NTase-associated protein 19 (151 aa).

3 consecutive transmembrane segments (helical) span residues T25–L45, V52–L72, and I127–K147.

Belongs to the Cap19 family.

The protein resides in the cell inner membrane. Its function is as follows. Membrane protein component of a CBASS (cyclic oligonucleotide-based antiphage signaling system) which provides immunity against bacteriophage. The CD-NTase protein synthesizes cyclic nucleotides in response to infection; these serve as specific second messenger signals. The signals activate a diverse range of effectors, leading to bacterial cell death and thus abortive phage infection. A type III CBASS system. Expression of this CBASS system (Cap17-CapW-CdnC-Cap7-Cap6-Cap18-Cap19) in a susceptible E.coli (strain JP313) confers resistance to bacteriophage lambda cI-. The chain is CD-NTase-associated protein 19 from Escherichia coli.